Consider the following 263-residue polypeptide: Acyl-[acyl-carrier-protein]--UDP-N-acetylglucosamine O-acyltransferase (263 aa).

It belongs to the transferase hexapeptide repeat family. LpxA subfamily. Homotrimer.

It is found in the cytoplasm. The enzyme catalyses a (3R)-hydroxyacyl-[ACP] + UDP-N-acetyl-alpha-D-glucosamine = a UDP-3-O-[(3R)-3-hydroxyacyl]-N-acetyl-alpha-D-glucosamine + holo-[ACP]. It functions in the pathway glycolipid biosynthesis; lipid IV(A) biosynthesis; lipid IV(A) from (3R)-3-hydroxytetradecanoyl-[acyl-carrier-protein] and UDP-N-acetyl-alpha-D-glucosamine: step 1/6. Its function is as follows. Involved in the biosynthesis of lipid A, a phosphorylated glycolipid that anchors the lipopolysaccharide to the outer membrane of the cell. This Tolumonas auensis (strain DSM 9187 / NBRC 110442 / TA 4) protein is Acyl-[acyl-carrier-protein]--UDP-N-acetylglucosamine O-acyltransferase.